A 214-amino-acid chain; its full sequence is Small ribosomal subunit protein uS4c (214 aa).

2 stretches are compositionally biased toward basic residues: residues 1-14 (MSRYRGPRVKKIKR) and 36-46 (LSRPKPKKKSQ). A disordered region spans residues 1–46 (MSRYRGPRVKKIKRLGSLPGLTTKKPPIVVRDPRKLSRPKPKKKSQ). One can recognise an S4 RNA-binding domain in the interval 92 to 153 (MRLDNTLFRL…KEKSKALIQN (62 aa)).

This sequence belongs to the universal ribosomal protein uS4 family. In terms of assembly, part of the 30S ribosomal subunit. Contacts protein S5. The interaction surface between S4 and S5 is involved in control of translational fidelity.

The protein localises to the plastid. It localises to the chloroplast. Its function is as follows. One of the primary rRNA binding proteins, it binds directly to 16S rRNA where it nucleates assembly of the body of the 30S subunit. In terms of biological role, with S5 and S12 plays an important role in translational accuracy. The protein is Small ribosomal subunit protein uS4c (rps4) of Pelargonium hortorum (Common geranium).